Reading from the N-terminus, the 125-residue chain is Sulfiredoxin, chloroplastic/mitochondrial (125 aa).

Residues 1–22 constitute a chloroplast and mitochondrion transit peptide; it reads MANLMMRLPISLRSFSVSASSS.

It belongs to the sulfiredoxin family. As to expression, low expression in photosynthetic tissues such as leaves and sepals.

The protein localises to the plastid. The protein resides in the chloroplast. It localises to the mitochondrion. The enzyme catalyses S-hydroxy-S-oxy-L-cysteinyl-[peroxiredoxin] + [protein]-dithiol + ATP = S-hydroxy-L-cysteinyl-[peroxiredoxin] + [protein]-disulfide + ADP + phosphate. Contributes to oxidative stress resistance by reducing cysteine-sulfinic acid formed under exposure to oxidants in a peroxiredoxin. May catalyze the reduction in a multi-step process by acting both as a specific phosphotransferase and a thioltransferase. Required to switch on the antioxidant pathway to regenerate the oxidative damage. In mitochondrion, catalyzes the retroreduction of the inactive sulfinic form of atypical Prx IIF using thioredoxin as reducing agent. In Arabidopsis thaliana (Mouse-ear cress), this protein is Sulfiredoxin, chloroplastic/mitochondrial (SRX).